Here is a 170-residue protein sequence, read N- to C-terminus: Vimentin A1 (170 aa).

Over residues 1–10 the composition is skewed to polar residues; sequence DLTEAANKSN. The tract at residues 1–20 is disordered; sequence DLTEAANKSNEALRLAKQES. Residues 1–111 are coil 2; sequence DLTEAANKSN…ATYRKLLEGE (111 aa). One can recognise an IF rod domain in the interval 1 to 115; the sequence is DLTEAANKSN…KLLEGEESRI (115 aa). The segment at 112–170 is tail; that stretch reads ESRISTPLPNFSSFNLRETMLELKPNIESTFTKKVLIKTIETRDGQVLNESTQNHDDLE.

It belongs to the intermediate filament family. As to quaternary structure, homomer. Post-translationally, one of the most prominent phosphoproteins in various cells of mesenchymal origin. Phosphorylation is enhanced during cell division, at which time vimentin filaments are significantly reorganized. As to expression, expressed in low amounts in retina, optic nerve, and brain and in higher amounts in spinal cord.

Vimentins are class-III intermediate filaments found in various non-epithelial cells, especially mesenchymal cells. Vimentin is attached to the nucleus, endoplasmic reticulum, and mitochondria, either laterally or terminally. In Carassius auratus (Goldfish), this protein is Vimentin A1.